The following is a 487-amino-acid chain: Cyclic AMP-dependent transcription factor ATF-2 (487 aa).

The C2H2-type zinc finger occupies 7 to 31 (FLCTAPGCGQRFTNEDHLAVHKHKH). Thr-34 is modified (phosphothreonine; by PKC/PRKCH). The residue at position 44 (Ser-44) is a Phosphoserine; by VRK1. A phosphothreonine mark is found at Thr-51 and Thr-53. Phosphothreonine; by VRK1 is present on Thr-55. Ser-72 and Ser-94 each carry phosphoserine. A Phosphothreonine modification is found at Thr-98. Ser-103 carries the post-translational modification Phosphoserine; by PKC/PRKCA and PKC/PRKCB. Disordered regions lie at residues 107-130 (EPSV…TNDE) and 241-355 (PGIP…RQKR). Position 118 is a phosphoserine (Ser-118). Polar residues predominate over residues 264–275 (LTQQHPPVTNGD). The tract at residues 278-281 (KGHG) is essential for its histone acetyltransferase activity. Over residues 300-316 (PATSTTETPASPAHTTP) the composition is skewed to low complexity. A Phosphoserine modification is found at Ser-310. Ser-322 bears the Phosphoserine; by PKC/PRKCA and PKC/PRKCB mark. Residues 328 to 345 (AANEDPDEKRRKFLERNR) are compositionally biased toward basic and acidic residues. The 64-residue stretch at 334 to 397 (DEKRRKFLER…AQLKQLLLAH (64 aa)) folds into the bZIP domain. The segment at 336–356 (KRRKFLERNRAAASRCRQKRK) is basic motif. Residue Lys-339 is modified to N6-acetyllysine. Ser-349 is subject to Phosphoserine; by PKC/PRKCA and PKC/PRKCB. Residue Lys-356 is modified to N6-acetyllysine. Residues 362 to 390 (LEKKAEDLSSLNGQLQSEVTLLRNEVAQL) form a leucine-zipper region. The Nuclear export signal motif lies at 387-396 (VAQLKQLLLA). Residues 407–487 (KKSGYHTADK…PSSQAQPSGS (81 aa)) form a disordered region. Residues Ser-424 and Ser-428 each carry the phosphoserine modification. Residues 425 to 436 (VPSSPHTEAIQH) are compositionally biased toward polar residues. Over residues 437–449 (SSVSTSNGVSSTS) the composition is skewed to low complexity. The segment covering 457–470 (SVLTQMADQSTEPA) has biased composition (polar residues). A phosphoserine; by ATM mark is found at Ser-472 and Ser-480. Polar residues predominate over residues 478–487 (PSSQAQPSGS).

Belongs to the bZIP family. ATF subfamily. As to quaternary structure, binds DNA as a dimer and can form a homodimer in the absence of DNA. Can form a heterodimer with JUN. Heterodimerization is essential for its transcriptional activity. Interacts with SMAD3 and SMAD4. Binds through its N-terminal region to UTF1 which acts as a coactivator of ATF2 transcriptional activity. Interacts with the HK1/VDAC1 complex. Interacts with NBN, MRE11, XPO1, KAT5 and CUL3. In terms of processing, phosphorylation of Thr-51 by MAPK14 and MAPK11, and at Thr-53 by MAPK1/ERK2, MAPK3/ERK1, MAPK11, MAPK12 and MAPK14 in response to external stimulus like insulin causes increased transcriptional activity. Phosphorylated by PLK3 following hyperosmotic stress. Also phosphorylated and activated by JNK and CaMK4. ATM-mediated phosphorylation at Ser-472 and Ser-480 stimulates its function in DNA damage response. Phosphorylation at Ser-44, Thr-55 and Ser-103 activates its transcriptional activity. Phosphorylation at Thr-51 or Thr-53 enhances acetylation of histones H2B and H4.

The protein localises to the nucleus. The protein resides in the cytoplasm. It localises to the mitochondrion outer membrane. Transcriptional activator which regulates the transcription of various genes, including those involved in anti-apoptosis, cell growth, and DNA damage response. Dependent on its binding partner, binds to CRE (cAMP response element) consensus sequences (5'-TGACGTCA-3') or to AP-1 (activator protein 1) consensus sequences (5'-TGACTCA-3'). In the nucleus, contributes to global transcription and the DNA damage response, in addition to specific transcriptional activities that are related to cell development, proliferation and death. In the cytoplasm, interacts with and perturbs HK1- and VDAC1-containing complexes at the mitochondrial outer membrane, thereby impairing mitochondrial membrane potential, inducing mitochondrial leakage and promoting cell death. The phosphorylated form (mediated by ATM) plays a role in the DNA damage response and is involved in the ionizing radiation (IR)-induced S phase checkpoint control and in the recruitment of the MRN complex into the IR-induced foci (IRIF). Exhibits histone acetyltransferase (HAT) activity which specifically acetylates histones H2B and H4 in vitro. In concert with CUL3 and RBX1, promotes the degradation of KAT5 thereby attenuating its ability to acetylate and activate ATM. Can elicit oncogenic or tumor suppressor activities depending on the tissue or cell type. In Rattus norvegicus (Rat), this protein is Cyclic AMP-dependent transcription factor ATF-2 (Atf2).